Here is a 79-residue protein sequence, read N- to C-terminus: Sulfur carrier protein TusA (79 aa).

Catalysis depends on cysteine 17, which acts as the Cysteine persulfide intermediate.

This sequence belongs to the sulfur carrier protein TusA family.

It localises to the cytoplasm. Functionally, sulfur carrier protein which probably makes part of a sulfur-relay system. The protein is Sulfur carrier protein TusA of Idiomarina loihiensis (strain ATCC BAA-735 / DSM 15497 / L2-TR).